The sequence spans 64 residues: Translation machinery-associated protein 7 (64 aa).

The interval 1–64 (MSGREGGKKK…GGGIKKSGKK (64 aa)) is disordered. A coiled-coil region spans residues 21 to 50 (EMDEDEMAFKQKQKEDQKAMEQLKAKAAGK). Basic and acidic residues predominate over residues 27-44 (MAFKQKQKEDQKAMEQLK). Residues 52-64 (PLTGGGIKKSGKK) show a composition bias toward gly residues.

Belongs to the TMA7 family.

The polypeptide is Translation machinery-associated protein 7 (tma7) (Danio rerio (Zebrafish)).